A 247-amino-acid polypeptide reads, in one-letter code: Mast cell protease 8 (247 aa).

Residues 1 to 19 (MFLLLVLLVAALPVNAEGG) form the signal peptide. Glu20 is a propeptide (activation peptide). Residues 21–242 (IIWGTESKPH…FMPWIRKTMK (222 aa)) enclose the Peptidase S1 domain. A glycan (N-linked (GlcNAc...) asparagine) is linked at Asn41. An intrachain disulfide couples Cys49 to Cys65. His64 acts as the Charge relay system in catalysis. Residues Asn71 and Asn101 are each glycosylated (N-linked (GlcNAc...) asparagine). Asp107 (charge relay system) is an active-site residue. Disulfide bonds link Cys141-Cys206 and Cys171-Cys185. 2 N-linked (GlcNAc...) asparagine glycosylation sites follow: Asn151 and Asn179. The Charge relay system role is filled by Ser200.

Belongs to the peptidase S1 family. Granzyme subfamily.

It is found in the secreted. The protein resides in the cytoplasmic granule. The polypeptide is Mast cell protease 8 (Mcpt8) (Mus musculus (Mouse)).